The primary structure comprises 100 residues: Large ribosomal subunit protein bL27 (100 aa).

Residues 1-9 (MIIMNLQIF) constitute a propeptide that is removed on maturation. The segment at 13–32 (KGMGSSKNGRDSESKRLGTK) is disordered.

This sequence belongs to the bacterial ribosomal protein bL27 family. Post-translationally, the N-terminus is cleaved by ribosomal processing cysteine protease Prp.

The polypeptide is Large ribosomal subunit protein bL27 (Clostridium kluyveri (strain ATCC 8527 / DSM 555 / NBRC 12016 / NCIMB 10680 / K1)).